A 432-amino-acid chain; its full sequence is MGMTITEKILAEHAGKKEVHPGELITAKIDLAMANDVTAPLAIKILEKYGIDKVFDPERIALVLSHFVPAKDIKSAEQAKIVREFVKKHGIKWFFEEGEGIEHAILPEQGLVVPGDLVVGADSHTCTYGALGAFATGVGSTDIAYAMATGEVWLRVPESMKFIFYGKLKPWVMGKDLILYTIGQIGVDGALYRAMEFDGETIRNLSMEQRFTIANMAIEAGGKSGIISPDEKTIEYVKQRAKRPWKVYQSDPDAEYHSVYEWDASQIEPLVAWPYLPSNVHPVSESTHITIDQAFIGSCTNGRIEDLRVAAKVFEAALKQGKKVHPYVRCIVIPASKAIYKQALKEGLIDIFMEAGCVVSTSTCGPCLGGHMGVLAEGERCISTSNRNFPGRMGHPKSESYLANPAVVAASAIMGRIAHPDEVVKAETLAGV.

The [4Fe-4S] cluster site is built by Cys-299, Cys-364, and Cys-367.

Belongs to the aconitase/IPM isomerase family. LeuC type 2 subfamily. In terms of assembly, heterodimer of LeuC and LeuD. The cofactor is [4Fe-4S] cluster.

The catalysed reaction is (2R,3S)-3-isopropylmalate = (2S)-2-isopropylmalate. The protein operates within amino-acid biosynthesis; L-leucine biosynthesis; L-leucine from 3-methyl-2-oxobutanoate: step 2/4. In terms of biological role, catalyzes the isomerization between 2-isopropylmalate and 3-isopropylmalate, via the formation of 2-isopropylmaleate. The polypeptide is 3-isopropylmalate dehydratase large subunit (Aquifex aeolicus (strain VF5)).